We begin with the raw amino-acid sequence, 173 residues long: Large ribosomal subunit protein uL10 (173 aa).

This sequence belongs to the universal ribosomal protein uL10 family. As to quaternary structure, part of the ribosomal stalk of the 50S ribosomal subunit. The N-terminus interacts with L11 and the large rRNA to form the base of the stalk. The C-terminus forms an elongated spine to which L12 dimers bind in a sequential fashion forming a multimeric L10(L12)X complex.

Its function is as follows. Forms part of the ribosomal stalk, playing a central role in the interaction of the ribosome with GTP-bound translation factors. This is Large ribosomal subunit protein uL10 from Bifidobacterium animalis subsp. lactis (strain AD011).